Consider the following 252-residue polypeptide: Phosphate import ATP-binding protein PstB 1 (252 aa).

The ABC transporter domain occupies 6–247 (ISSKDLHLYY…PKEKQTEDYI (242 aa)). 38–45 (GPSGCGKS) contributes to the ATP binding site.

This sequence belongs to the ABC transporter superfamily. Phosphate importer (TC 3.A.1.7) family. The complex is composed of two ATP-binding proteins (PstB), two transmembrane proteins (PstC and PstA) and a solute-binding protein (PstS).

The protein localises to the cell membrane. It carries out the reaction phosphate(out) + ATP + H2O = ADP + 2 phosphate(in) + H(+). Part of the ABC transporter complex PstSACB involved in phosphate import. Responsible for energy coupling to the transport system. The protein is Phosphate import ATP-binding protein PstB 1 of Enterococcus faecalis (strain ATCC 700802 / V583).